Consider the following 380-residue polypeptide: Pregnancy-associated glycoprotein 4 (380 aa).

Positions 1-15 (MKWLVLLGLVAFSEC) are cleaved as a signal peptide. Positions 16–53 (IFKIPLRRVKTMRKTLSGKNMLNDVLKEHPYRLPQISF) are cleaved as a propeptide — activation peptide. In terms of domain architecture, Peptidase A1 spans 71-377 (YVGNITIGTP…DRGNDRIGLA (307 aa)). Asparagine 74 carries an N-linked (GlcNAc...) asparagine glycan. Aspartate 89 is a catalytic residue. Cysteine 102 and cysteine 107 form a disulfide bridge. The N-linked (GlcNAc...) asparagine glycan is linked to asparagine 125. A disulfide bridge connects residues cysteine 261 and cysteine 265. Aspartate 270 is a catalytic residue. Cysteine 303 and cysteine 337 form a disulfide bridge.

This sequence belongs to the peptidase A1 family. In terms of tissue distribution, trophoblast and placental tissue. Produced specifically in the invasive binucleate cells of the placenta.

The protein localises to the secreted. The protein resides in the extracellular space. The protein is Pregnancy-associated glycoprotein 4 of Ovis aries (Sheep).